Here is a 297-residue protein sequence, read N- to C-terminus: Homoserine kinase (297 aa).

82–92 (PLTRGLGSSAS) lines the ATP pocket.

Belongs to the GHMP kinase family. Homoserine kinase subfamily.

The protein resides in the cytoplasm. The catalysed reaction is L-homoserine + ATP = O-phospho-L-homoserine + ADP + H(+). The protein operates within amino-acid biosynthesis; L-threonine biosynthesis; L-threonine from L-aspartate: step 4/5. Functionally, catalyzes the ATP-dependent phosphorylation of L-homoserine to L-homoserine phosphate. The protein is Homoserine kinase of Bacillus thuringiensis (strain Al Hakam).